We begin with the raw amino-acid sequence, 262 residues long: Ribosomal RNA small subunit methyltransferase A (262 aa).

Residues H13, L15, G40, E61, D85, and N103 each coordinate S-adenosyl-L-methionine.

It belongs to the class I-like SAM-binding methyltransferase superfamily. rRNA adenine N(6)-methyltransferase family. RsmA subfamily.

Its subcellular location is the cytoplasm. It carries out the reaction adenosine(1518)/adenosine(1519) in 16S rRNA + 4 S-adenosyl-L-methionine = N(6)-dimethyladenosine(1518)/N(6)-dimethyladenosine(1519) in 16S rRNA + 4 S-adenosyl-L-homocysteine + 4 H(+). In terms of biological role, specifically dimethylates two adjacent adenosines (A1518 and A1519) in the loop of a conserved hairpin near the 3'-end of 16S rRNA in the 30S particle. May play a critical role in biogenesis of 30S subunits. The polypeptide is Ribosomal RNA small subunit methyltransferase A (Bordetella petrii (strain ATCC BAA-461 / DSM 12804 / CCUG 43448)).